A 528-amino-acid chain; its full sequence is 4-nitrophenol 4-monooxygenase/4-nitrocatechol 2-monooxygenase, oxygenase component (528 aa).

100-104 (RPPAG) is a substrate binding site. Residues 153-155 (PMF), 159-162 (QFDR), and threonine 194 contribute to the FAD site. 205–206 (GN) is a binding site for substrate. 461–464 (TMQR) is a binding site for FAD.

It belongs to the FADH(2)-utilizing monooxygenase family. The 4-NP/4-NCA monooxygenase is composed of an oxygenase component NpcA and a reductase component NpcB. It depends on FAD as a cofactor.

It carries out the reaction 4-nitrophenol + NADH + O2 + H(+) = 4-nitrocatechol + NAD(+) + H2O. The catalysed reaction is 4-nitrocatechol + NADPH + O2 = 2-hydroxy-1,4-benzoquinone + nitrite + NADP(+) + H2O. The enzyme catalyses 4-nitrocatechol + NADH + O2 = 2-hydroxy-1,4-benzoquinone + nitrite + NAD(+) + H2O. It participates in aromatic compound metabolism. It functions in the pathway xenobiotic degradation. With respect to regulation, inhibited by methimazole. Functionally, involved in the degradation of para-nitrophenol (4-NP). Catalyzes both the initial hydroxylation of 4-NP to produce 4-nitrocatechol (4-NCA) and the subsequent oxidative release of the nitro group from 4-NCA to produce 2-hydroxy-1,4-benzoquinone. It can also use 4-nitroresorcinol as substrate with a rate of nitrite release similar to that observed with the two physiological substrates, 4-PN and 4-NCA. This is 4-nitrophenol 4-monooxygenase/4-nitrocatechol 2-monooxygenase, oxygenase component (npcA) from Rhodococcus opacus (Nocardia opaca).